Reading from the N-terminus, the 212-residue chain is Large ribosomal subunit protein uL3 (212 aa).

A disordered region spans residues 133 to 152 (RGSMGHGSKYHRRPGSLGAK).

Belongs to the universal ribosomal protein uL3 family. As to quaternary structure, part of the 50S ribosomal subunit. Forms a cluster with proteins L14 and L19.

Functionally, one of the primary rRNA binding proteins, it binds directly near the 3'-end of the 23S rRNA, where it nucleates assembly of the 50S subunit. This is Large ribosomal subunit protein uL3 from Syntrophomonas wolfei subsp. wolfei (strain DSM 2245B / Goettingen).